We begin with the raw amino-acid sequence, 535 residues long: MMQHSSSVTQEPTNPFGFVSQVGSFVFNNSCSRVSKSNFTLDSYSNLLSNYLYFDCNVKKDSLNHKNKPKASPLLSLSISNKSASSFSRVLFQFNKAIRFHCEKIPLGFASVGVNCGESNGVREEGSVVENEGIPDNGVESEPPKKVLILMSDTGGGHRASAEAIRSAFNEEFGDKYQVFITDLWTEHTPWPFNQLPRSYNFLVKHGSLWRMTYYATAPRLVHQTNFAATSTFIAREVAKGLMKYQPDIIISVHPLMQHVPLRILRSKGLLKKIIFTTVITDLSTCHPTWFHKLVTRCYCPSEEVAKRALRAGLKPYQLKVYGLPVRPSFVKPVPPKVELRKELGMEEHLPAVLLMGGGEGMGPIEATARALGDALYDEIHGEPIGQVLVICGRNKKLFNRLTSVQWKIPVQVKGFVTKMEECMGACDCIITKAGPGTIAEAVIRGLPIILNDYIAGQEAGNVPYVIENGCGKFSKSPKKIANIVAQWFGPRQDELRIMSQNALRLARPDAVFKIVHDMHELVRQRNFEPQCCPA.

A chloroplast-targeting transit peptide spans 1-113 (MMQHSSSVTQ…KIPLGFASVG (113 aa)).

Belongs to the glycosyltransferase 28 family.

The protein resides in the plastid. Its subcellular location is the chloroplast membrane. It carries out the reaction a 1,2-diacyl-sn-glycerol + UDP-alpha-D-galactose = a 1,2-diacyl-3-O-(beta-D-galactosyl)-sn-glycerol + UDP + H(+). In terms of biological role, involved in the synthesis of the major structural component of photosynthetic membranes. This Nicotiana tabacum (Common tobacco) protein is Probable monogalactosyldiacylglycerol synthase, chloroplastic (MGD A).